A 255-amino-acid polypeptide reads, in one-letter code: Type III pantothenate kinase (255 aa).

6–13 (DIGNTNTV) serves as a coordination point for ATP. Substrate contacts are provided by residues Y100 and 107–110 (GADR). The Proton acceptor role is filled by D109. Residue D129 coordinates K(+). T132 serves as a coordination point for ATP. A substrate-binding site is contributed by T185.

Belongs to the type III pantothenate kinase family. In terms of assembly, homodimer. NH4(+) serves as cofactor. K(+) is required as a cofactor.

Its subcellular location is the cytoplasm. The catalysed reaction is (R)-pantothenate + ATP = (R)-4'-phosphopantothenate + ADP + H(+). It functions in the pathway cofactor biosynthesis; coenzyme A biosynthesis; CoA from (R)-pantothenate: step 1/5. In terms of biological role, catalyzes the phosphorylation of pantothenate (Pan), the first step in CoA biosynthesis. The polypeptide is Type III pantothenate kinase (Desulfosudis oleivorans (strain DSM 6200 / JCM 39069 / Hxd3) (Desulfococcus oleovorans)).